The chain runs to 747 residues: Sulfhydryl oxidase 1 (747 aa).

The N-terminal stretch at 1-29 (MRRCNSGSGPPPSLLLLLLWLLAVPGANA) is a signal peptide. The Thioredoxin domain maps to 36-156 (YSPSDPLTLL…RERLIDALES (121 aa)). Residues cysteine 70 and cysteine 73 each act as nucleophile in the active site. 2 cysteine pairs are disulfide-bonded: cysteine 70/cysteine 73 and cysteine 101/cysteine 110. Asparagine 130 carries N-linked (GlcNAc...) (complex) asparagine glycosylation. The N-linked (GlcNAc...) asparagine glycan is linked to asparagine 243. Residues cysteine 393 and cysteine 405 are joined by a disulfide bond. The ERV/ALR sulfhydryl oxidase domain maps to 396-503 (SEPHFRGFPC…EDPQFPKVQW (108 aa)). 3 residues coordinate FAD: arginine 401, tryptophan 408, and histidine 412. A Phosphoserine; by FAM20C modification is found at serine 426. Cysteine 449 and cysteine 452 are joined by a disulfide. Residues aspartate 451, histidine 455, 478-485 (WSSHNRVN), lysine 500, and tryptophan 503 contribute to the FAD site. Cysteine 509 and cysteine 512 form a disulfide bridge. The interval 573 to 633 (SRNSTLDPGK…HMAELQRNEQ (61 aa)) is disordered. Asparagine 575 is a glycosylation site (N-linked (GlcNAc...) asparagine). A compositionally biased stretch (basic and acidic residues) spans 621–633 (PPEHMAELQRNEQ). A helical membrane pass occupies residues 710–730 (ISLCVGLYSLSFMGLLAMYTY).

This sequence belongs to the quiescin-sulfhydryl oxidase (QSOX) family. In terms of assembly, monomer. FAD is required as a cofactor. N-glycosylated. O-glycosylated on Thr and Ser residues. In terms of tissue distribution, expressed in heart, placenta, lung, liver, skeletal muscle, pancreas and very weakly in brain and kidney.

It is found in the golgi apparatus membrane. It localises to the secreted. The catalysed reaction is 2 R'C(R)SH + O2 = R'C(R)S-S(R)CR' + H2O2. Its function is as follows. Catalyzes the oxidation of sulfhydryl groups in peptide and protein thiols to disulfides with the reduction of oxygen to hydrogen peroxide. Plays a role in disulfide bond formation in a variety of extracellular proteins. In fibroblasts, required for normal incorporation of laminin into the extracellular matrix, and thereby for normal cell-cell adhesion and cell migration. The polypeptide is Sulfhydryl oxidase 1 (QSOX1) (Homo sapiens (Human)).